We begin with the raw amino-acid sequence, 138 residues long: Large ribosomal subunit protein uL16 (138 aa).

A compositionally biased stretch (basic residues) spans 1 to 13 (MLQPARRKYRKEQ). Residues 1–21 (MLQPARRKYRKEQKGRNTGIA) form a disordered region.

This sequence belongs to the universal ribosomal protein uL16 family. As to quaternary structure, part of the 50S ribosomal subunit.

Its function is as follows. Binds 23S rRNA and is also seen to make contacts with the A and possibly P site tRNAs. In Albidiferax ferrireducens (strain ATCC BAA-621 / DSM 15236 / T118) (Rhodoferax ferrireducens), this protein is Large ribosomal subunit protein uL16.